The chain runs to 431 residues: Glutamate-1-semialdehyde 2,1-aminomutase (431 aa).

The residue at position 265 (lysine 265) is an N6-(pyridoxal phosphate)lysine.

Belongs to the class-III pyridoxal-phosphate-dependent aminotransferase family. HemL subfamily. In terms of assembly, homodimer. Pyridoxal 5'-phosphate is required as a cofactor.

Its subcellular location is the cytoplasm. The enzyme catalyses (S)-4-amino-5-oxopentanoate = 5-aminolevulinate. It participates in porphyrin-containing compound metabolism; protoporphyrin-IX biosynthesis; 5-aminolevulinate from L-glutamyl-tRNA(Glu): step 2/2. This Vibrio atlanticus (strain LGP32) (Vibrio splendidus (strain Mel32)) protein is Glutamate-1-semialdehyde 2,1-aminomutase.